A 610-amino-acid polypeptide reads, in one-letter code: MMDEQRKAEYESQSLQLRAELKQFEAEWAQKNDGKKPSREAIKQNPDIAQKYKQYNKLRDILSGKIPPPTKSNNQDPSQRKRKQPETSLPSASTPSKRNRSAATPKSQHYSAVHEAITPDVARKLFSPAVPSSIGPTPQKDGRVLGLFDLISHTPSKSTDETKPRASGFTATPSNRRHALDLENDKDDDDHDEKDGKEFITPSIPRHRNLDRTPSSGRNRNLLDSFLGVRATKTSTPLNKNTGNSPSKNNLTKTPSGERSVSKLQFATPAFLRRTSAPLPPVDENGEWLDIEPLKLPRKPFSIAKGKGLSSVVASLRKMEEEKLDEELDMLREMEAMEQGGMGPPPPKQTVASTSEDTEKKKQVTDPAGAEVVPEEENSFEEDEAALIEVEASFLESPSSKRKKERRPVLLSGFDDENFYDSQDEEDLSKEGLDRNGQPLRVFKKKGQKRTTRKVNMRPTRTKRPSAPIAEEEDDGEEEHNDVIPETQFDATKNLDGDDHHTLDSLSSGGSGSEFDDGSEGEDEEAETSTTKAAKAAAKKKAPSAKEKTKKDATTETKKKKGTKEGGDEEPAKKPRMVKATANANFKRLKLKNNGAKGGPAHNSRFRRRR.

A compositionally biased stretch (basic and acidic residues) spans W28–I42. Disordered stretches follow at residues W28–E115, S127–V261, and E338–R610. Composition is skewed to polar residues over residues E86–Y110 and T232–V261. 2 stretches are compositionally biased toward acidic residues: residues V373 to A386 and F414 to L428. Positions V442–R464 are enriched in basic residues. Acidic residues predominate over residues A470–H480. Basic and acidic residues predominate over residues K493–L503. Residues E514 to E527 show a composition bias toward acidic residues. Positions S544–K573 are enriched in basic and acidic residues.

It belongs to the SLD2 family.

It is found in the cytoplasm. It localises to the nucleus. In terms of biological role, has a role in the initiation of DNA replication. Required at S-phase checkpoint. The polypeptide is DNA replication regulator sld2 (drc-4) (Neurospora crassa (strain ATCC 24698 / 74-OR23-1A / CBS 708.71 / DSM 1257 / FGSC 987)).